The sequence spans 264 residues: Glutamate racemase (264 aa).

Substrate is bound by residues 10–11 (DS) and 42–43 (YG). The Proton donor/acceptor role is filled by C73. 74–75 (NT) lines the substrate pocket. The Proton donor/acceptor role is filled by C183. Position 184–185 (184–185 (TH)) interacts with substrate.

The protein belongs to the aspartate/glutamate racemases family.

The enzyme catalyses L-glutamate = D-glutamate. The protein operates within cell wall biogenesis; peptidoglycan biosynthesis. Its function is as follows. Provides the (R)-glutamate required for cell wall biosynthesis. This is Glutamate racemase from Streptococcus pyogenes serotype M2 (strain MGAS10270).